Here is a 150-residue protein sequence, read N- to C-terminus: Urease accessory protein UreE (150 aa).

The protein belongs to the UreE family.

It localises to the cytoplasm. Involved in urease metallocenter assembly. Binds nickel. Probably functions as a nickel donor during metallocenter assembly. In Staphylococcus carnosus (strain TM300), this protein is Urease accessory protein UreE.